The primary structure comprises 616 residues: Dihydroxy-acid dehydratase (616 aa).

A Mg(2+)-binding site is contributed by aspartate 81. Cysteine 122 contributes to the [2Fe-2S] cluster binding site. 2 residues coordinate Mg(2+): aspartate 123 and lysine 124. Lysine 124 carries the N6-carboxylysine modification. A [2Fe-2S] cluster-binding site is contributed by cysteine 195. Glutamate 491 lines the Mg(2+) pocket. The Proton acceptor role is filled by serine 517.

This sequence belongs to the IlvD/Edd family. In terms of assembly, homodimer. [2Fe-2S] cluster serves as cofactor. Requires Mg(2+) as cofactor.

It catalyses the reaction (2R)-2,3-dihydroxy-3-methylbutanoate = 3-methyl-2-oxobutanoate + H2O. It carries out the reaction (2R,3R)-2,3-dihydroxy-3-methylpentanoate = (S)-3-methyl-2-oxopentanoate + H2O. It participates in amino-acid biosynthesis; L-isoleucine biosynthesis; L-isoleucine from 2-oxobutanoate: step 3/4. The protein operates within amino-acid biosynthesis; L-valine biosynthesis; L-valine from pyruvate: step 3/4. Functions in the biosynthesis of branched-chain amino acids. Catalyzes the dehydration of (2R,3R)-2,3-dihydroxy-3-methylpentanoate (2,3-dihydroxy-3-methylvalerate) into 2-oxo-3-methylpentanoate (2-oxo-3-methylvalerate) and of (2R)-2,3-dihydroxy-3-methylbutanoate (2,3-dihydroxyisovalerate) into 2-oxo-3-methylbutanoate (2-oxoisovalerate), the penultimate precursor to L-isoleucine and L-valine, respectively. The chain is Dihydroxy-acid dehydratase from Photorhabdus laumondii subsp. laumondii (strain DSM 15139 / CIP 105565 / TT01) (Photorhabdus luminescens subsp. laumondii).